A 59-amino-acid polypeptide reads, in one-letter code: UPF0181 protein YoaH (59 aa).

It belongs to the UPF0181 family.

This Shigella flexneri serotype 5b (strain 8401) protein is UPF0181 protein YoaH.